The following is a 286-amino-acid chain: 2-dehydro-3-deoxyphosphooctonate aldolase (286 aa).

This sequence belongs to the KdsA family.

It is found in the cytoplasm. It catalyses the reaction D-arabinose 5-phosphate + phosphoenolpyruvate + H2O = 3-deoxy-alpha-D-manno-2-octulosonate-8-phosphate + phosphate. It functions in the pathway carbohydrate biosynthesis; 3-deoxy-D-manno-octulosonate biosynthesis; 3-deoxy-D-manno-octulosonate from D-ribulose 5-phosphate: step 2/3. The protein operates within bacterial outer membrane biogenesis; lipopolysaccharide biosynthesis. This Shewanella denitrificans (strain OS217 / ATCC BAA-1090 / DSM 15013) protein is 2-dehydro-3-deoxyphosphooctonate aldolase.